The primary structure comprises 288 residues: Nucleotide-binding protein Tola_2941 (288 aa).

8-15 (GRSGSGKT) is an ATP binding site. Position 56–59 (56–59 (DVRN)) interacts with GTP.

This sequence belongs to the RapZ-like family.

Functionally, displays ATPase and GTPase activities. In Tolumonas auensis (strain DSM 9187 / NBRC 110442 / TA 4), this protein is Nucleotide-binding protein Tola_2941.